Here is a 179-residue protein sequence, read N- to C-terminus: uncharacterized protein (179 aa).

A compositionally biased stretch (polar residues) spans 1–10 (ATLSAGQPAS). 3 disordered regions span residues 1–35 (ATLS…RGKC), 59–80 (VRRN…PIVT), and 131–179 (ECPT…STCR). Basic residues predominate over residues 23–33 (LHRHPAPKRRG). The segment covering 149–158 (TPSRVRRSRR) has biased composition (basic residues).

This is an uncharacterized protein from Human cytomegalovirus (strain AD169) (HHV-5).